The sequence spans 436 residues: Xylose isomerase (436 aa).

Catalysis depends on residues His-100 and Asp-103. Residues Glu-231, Glu-267, His-270, Asp-295, Asp-306, Asp-308, and Asp-338 each coordinate Mg(2+).

The protein belongs to the xylose isomerase family. As to quaternary structure, homotetramer. Mg(2+) serves as cofactor.

The protein resides in the cytoplasm. The enzyme catalyses alpha-D-xylose = alpha-D-xylulofuranose. This chain is Xylose isomerase, found in Ruegeria sp. (strain TM1040) (Silicibacter sp.).